Here is a 1161-residue protein sequence, read N- to C-terminus: ATP-dependent helicase/deoxyribonuclease subunit B (1161 aa).

Belongs to the helicase family. AddB/RexB type 2 subfamily. As to quaternary structure, heterodimer of AddA and RexB. It depends on Mg(2+) as a cofactor.

Its function is as follows. The heterodimer acts as both an ATP-dependent DNA helicase and an ATP-dependent, dual-direction single-stranded exonuclease. Recognizes the chi site generating a DNA molecule suitable for the initiation of homologous recombination. This subunit has 5' -&gt; 3' nuclease activity but not helicase activity. The polypeptide is ATP-dependent helicase/deoxyribonuclease subunit B (Oenococcus oeni (strain ATCC BAA-331 / PSU-1)).